Reading from the N-terminus, the 87-residue chain is Putative regulatory protein GWCH70_1057 (87 aa).

It belongs to the RemA family.

This is Putative regulatory protein GWCH70_1057 from Geobacillus sp. (strain WCH70).